The following is a 151-amino-acid chain: UPF0735 ACT domain-containing protein SSP1116 (151 aa).

In terms of domain architecture, ACT spans 74–149; sequence TLILYVNDIV…HVSKVELISM (76 aa).

Belongs to the UPF0735 family.

The polypeptide is UPF0735 ACT domain-containing protein SSP1116 (Staphylococcus saprophyticus subsp. saprophyticus (strain ATCC 15305 / DSM 20229 / NCIMB 8711 / NCTC 7292 / S-41)).